A 315-amino-acid chain; its full sequence is Acetyl-coenzyme A carboxylase carboxyl transferase subunit alpha (315 aa).

The region spanning 40 to 293 (LQDKSKTLTE…REELSSQLAM (254 aa)) is the CoA carboxyltransferase C-terminal domain.

It belongs to the AccA family. In terms of assembly, acetyl-CoA carboxylase is a heterohexamer composed of biotin carboxyl carrier protein (AccB), biotin carboxylase (AccC) and two subunits each of ACCase subunit alpha (AccA) and ACCase subunit beta (AccD).

The protein localises to the cytoplasm. It carries out the reaction N(6)-carboxybiotinyl-L-lysyl-[protein] + acetyl-CoA = N(6)-biotinyl-L-lysyl-[protein] + malonyl-CoA. It functions in the pathway lipid metabolism; malonyl-CoA biosynthesis; malonyl-CoA from acetyl-CoA: step 1/1. Its function is as follows. Component of the acetyl coenzyme A carboxylase (ACC) complex. First, biotin carboxylase catalyzes the carboxylation of biotin on its carrier protein (BCCP) and then the CO(2) group is transferred by the carboxyltransferase to acetyl-CoA to form malonyl-CoA. This chain is Acetyl-coenzyme A carboxylase carboxyl transferase subunit alpha, found in Pseudomonas savastanoi pv. phaseolicola (strain 1448A / Race 6) (Pseudomonas syringae pv. phaseolicola (strain 1448A / Race 6)).